A 431-amino-acid chain; its full sequence is Enolase (431 aa).

Position 167 (Gln-167) interacts with (2R)-2-phosphoglycerate. The active-site Proton donor is the Glu-209. Positions 246, 289, and 316 each coordinate Mg(2+). Residues Lys-341, Arg-370, Ser-371, and Lys-392 each contribute to the (2R)-2-phosphoglycerate site. Lys-341 (proton acceptor) is an active-site residue.

This sequence belongs to the enolase family. In terms of assembly, component of the RNA degradosome, a multiprotein complex involved in RNA processing and mRNA degradation. Mg(2+) serves as cofactor.

The protein resides in the cytoplasm. It localises to the secreted. Its subcellular location is the cell surface. It carries out the reaction (2R)-2-phosphoglycerate = phosphoenolpyruvate + H2O. It functions in the pathway carbohydrate degradation; glycolysis; pyruvate from D-glyceraldehyde 3-phosphate: step 4/5. Its function is as follows. Catalyzes the reversible conversion of 2-phosphoglycerate (2-PG) into phosphoenolpyruvate (PEP). It is essential for the degradation of carbohydrates via glycolysis. This Marinobacter nauticus (strain ATCC 700491 / DSM 11845 / VT8) (Marinobacter aquaeolei) protein is Enolase.